The primary structure comprises 319 residues: Red chlorophyll catabolite reductase, chloroplastic (319 aa).

The N-terminal 39 residues, M1–Q39, are a transit peptide targeting the chloroplast. Red chlorophyll catabolite is bound by residues E154 and Y207–S209. The stretch at L255–K286 forms a coiled coil. D291 serves as a coordination point for red chlorophyll catabolite.

In terms of assembly, homodimer. Interacts with HCAR. Interacts with SGR1, NYC1, NOL, PPH, PAO and the LHCII complex. Part of a SGR1-CCE-LHCII complex, which acts in chlorophyll breakdown. As to expression, expressed in all tissues tested, including roots.

It localises to the plastid. The protein resides in the chloroplast stroma. It is found in the chloroplast thylakoid membrane. It carries out the reaction primary fluorescent chlorophyll catabolite + 2 oxidized [2Fe-2S]-[ferredoxin] = red chlorophyll catabolite + 2 reduced [2Fe-2S]-[ferredoxin] + 3 H(+). It participates in porphyrin-containing compound metabolism; chlorophyll degradation. Functionally, catalyzes the key reaction of chlorophyll catabolism, porphyrin macrocycle cleavage of pheophorbide a (pheide a) to a primary fluorescent catabolite (pFCC). Works in a two-step reaction with pheophorbide a oxygenase (PaO) by reducing the C20/C1 double bond of the intermediate, RCC. Belongs to the chlorophyll catabolic enzymes (CCEs). This Arabidopsis thaliana (Mouse-ear cress) protein is Red chlorophyll catabolite reductase, chloroplastic.